A 550-amino-acid chain; its full sequence is Major fimbrium tip subunit FimE (550 aa).

Residues 1 to 21 form the signal peptide; that stretch reads MKSKSIIAQLLYVLIAFMAVS. A lipid anchor (N-palmitoyl cysteine) is attached at Cys-22. Residue Cys-22 is the site of S-diacylglycerol cysteine attachment. Positions 22–51 are excised as a propeptide; the sequence is CVADKSEPCPSGEPTRVSGSIVSLEHHGLR.

This sequence belongs to the FimE family. In terms of assembly, fimbriae are composed of a major, structural subunit and the minor components FimC, FimD and FimE. Identified in a complex composed of FimC, FimD and FimE (in vitro). Does not directly interact with host proteins, but only as a complex with FimC and FimD.

The protein localises to the fimbrium. It is found in the cell outer membrane. Functionally, probably a component of the fimbrium tip; required for incorporation of FimC and FimD into fimbriae. These long, filamentous pili are attached to the cell surface; they mediate biofilm formation, adhesion onto host cells and onto other bacteria that are part of the oral microbiome. They play an important role in invasion of periodontal tissues and are major virulence factors. FimC, FimD and FimE contribute to interaction with host CXCR4 and thereby down-regulate the TLR2-mediated host immune response. This chain is Major fimbrium tip subunit FimE, found in Porphyromonas gingivalis (strain ATCC 33277 / DSM 20709 / CIP 103683 / JCM 12257 / NCTC 11834 / 2561).